Reading from the N-terminus, the 188-residue chain is MIEAAVSMSALGLGLGLLLGVAARRFHVESPPIVDAIEGILPGTNCGACGYPGCRGLAEAMSEGAAPVTACAPGGRDVALALAAIVETDGGGGAVPGMAEAEPTVAFIFEDHCTGCMRCFKRCPTDAIIGANRQIHTVVTDACIGCNACIEACPTEAIVARVKPKTLKSWYWDKPRTAFEARGTEVAA.

The interval 1–23 (MIEAAVSMSALGLGLGLLLGVAA) is hydrophobic. One can recognise a 4Fe-4S domain in the interval 29–88 (ESPPIVDAIEGILPGTNCGACGYPGCRGLAEAMSEGAAPVTACAPGGRDVALALAAIVET). 12 residues coordinate [4Fe-4S] cluster: C46, C49, C54, C71, C113, C116, C119, C123, C143, C146, C149, and C153. 4Fe-4S ferredoxin-type domains are found at residues 104–133 (TVAF…GANR) and 134–163 (QIHT…ARVK).

This sequence belongs to the 4Fe4S bacterial-type ferredoxin family. RnfB subfamily. In terms of assembly, the complex is composed of six subunits: RnfA, RnfB, RnfC, RnfD, RnfE and RnfG. The cofactor is [4Fe-4S] cluster.

The protein resides in the cellular chromatophore membrane. Part of a membrane-bound complex that couples electron transfer with translocation of ions across the membrane. The chain is Ion-translocating oxidoreductase complex subunit B from Cereibacter sphaeroides (strain ATCC 17023 / DSM 158 / JCM 6121 / CCUG 31486 / LMG 2827 / NBRC 12203 / NCIMB 8253 / ATH 2.4.1.) (Rhodobacter sphaeroides).